Reading from the N-terminus, the 95-residue chain is Large ribosomal subunit protein bL25 (95 aa).

It belongs to the bacterial ribosomal protein bL25 family. Part of the 50S ribosomal subunit; part of the 5S rRNA/L5/L18/L25 subcomplex. Contacts the 5S rRNA. Binds to the 5S rRNA independently of L5 and L18.

Its function is as follows. This is one of the proteins that binds to the 5S RNA in the ribosome where it forms part of the central protuberance. This chain is Large ribosomal subunit protein bL25, found in Haemophilus ducreyi (strain 35000HP / ATCC 700724).